A 488-amino-acid polypeptide reads, in one-letter code: Gamma-aminobutyric acid receptor subunit beta-4 (488 aa).

The N-terminal stretch at Met-1–Ala-25 is a signal peptide. Topologically, residues Gln-26–Tyr-244 are extracellular. Asn-32, Asn-104, Asn-173, and Asn-195 each carry an N-linked (GlcNAc...) asparagine glycan. Cys-160 and Cys-174 are oxidised to a cystine. The next 3 membrane-spanning stretches (helical) occupy residues Phe-245 to Ile-266, Ser-271 to Leu-292, and Ala-304 to Val-326. Over Asn-327–Lys-465 the chain is Cytoplasmic. A helical membrane pass occupies residues Trp-466–Val-487.

This sequence belongs to the ligand-gated ion channel (TC 1.A.9) family. Gamma-aminobutyric acid receptor (TC 1.A.9.5) subfamily. GABRB4 sub-subfamily. As to quaternary structure, generally pentameric. There are five types of GABA(A) receptor chains: alpha, beta, gamma, delta, and rho.

It is found in the postsynaptic cell membrane. Its subcellular location is the cell membrane. GABA, the major inhibitory neurotransmitter in the vertebrate brain, mediates neuronal inhibition by binding to the GABA/benzodiazepine receptor and opening an integral chloride channel. The polypeptide is Gamma-aminobutyric acid receptor subunit beta-4 (GABRB4) (Gallus gallus (Chicken)).